A 145-amino-acid polypeptide reads, in one-letter code: D-aminoacyl-tRNA deacylase (145 aa).

Residues 137 to 138 carry the Gly-cisPro motif, important for rejection of L-amino acids motif; that stretch reads GP.

Belongs to the DTD family. As to quaternary structure, homodimer.

It is found in the cytoplasm. The enzyme catalyses glycyl-tRNA(Ala) + H2O = tRNA(Ala) + glycine + H(+). The catalysed reaction is a D-aminoacyl-tRNA + H2O = a tRNA + a D-alpha-amino acid + H(+). Functionally, an aminoacyl-tRNA editing enzyme that deacylates mischarged D-aminoacyl-tRNAs. Also deacylates mischarged glycyl-tRNA(Ala), protecting cells against glycine mischarging by AlaRS. Acts via tRNA-based rather than protein-based catalysis; rejects L-amino acids rather than detecting D-amino acids in the active site. By recycling D-aminoacyl-tRNA to D-amino acids and free tRNA molecules, this enzyme counteracts the toxicity associated with the formation of D-aminoacyl-tRNA entities in vivo and helps enforce protein L-homochirality. The protein is D-aminoacyl-tRNA deacylase of Salmonella typhimurium (strain LT2 / SGSC1412 / ATCC 700720).